The sequence spans 225 residues: NAD(P)H-quinone oxidoreductase subunit K, chloroplastic (225 aa).

[4Fe-4S] cluster-binding residues include C43, C44, C108, and C139.

Belongs to the complex I 20 kDa subunit family. As to quaternary structure, NDH is composed of at least 16 different subunits, 5 of which are encoded in the nucleus. Requires [4Fe-4S] cluster as cofactor.

The protein localises to the plastid. Its subcellular location is the chloroplast thylakoid membrane. It catalyses the reaction a plastoquinone + NADH + (n+1) H(+)(in) = a plastoquinol + NAD(+) + n H(+)(out). The catalysed reaction is a plastoquinone + NADPH + (n+1) H(+)(in) = a plastoquinol + NADP(+) + n H(+)(out). NDH shuttles electrons from NAD(P)H:plastoquinone, via FMN and iron-sulfur (Fe-S) centers, to quinones in the photosynthetic chain and possibly in a chloroplast respiratory chain. The immediate electron acceptor for the enzyme in this species is believed to be plastoquinone. Couples the redox reaction to proton translocation, and thus conserves the redox energy in a proton gradient. The polypeptide is NAD(P)H-quinone oxidoreductase subunit K, chloroplastic (Hordeum vulgare (Barley)).